A 278-amino-acid polypeptide reads, in one-letter code: Manganese import system permease protein ScaB (278 aa).

8 helical membrane passes run 18–38, 61–81, 94–114, 134–154, 174–194, 196–216, 222–242, and 246–266; these read ALIT…FIIL, ILGI…SIII, TAIG…ISVA, LDMW…SIFF, VNFY…TAMQ, VGTI…YLYA, MILL…FIGY, and VAAG…SFFI.

It belongs to the ABC-3 integral membrane protein family. The complex is composed of two ATP-binding proteins (ScaC), two transmembrane proteins (ScaB) and a solute-binding protein (ScaA).

The protein localises to the cell membrane. Functionally, part of the high-affinity ABC transporter complex ScaABC involved in manganese import. Probably responsible for the translocation of the substrate across the membrane. Essential for growth under Mn(2+)-limiting conditions. This is Manganese import system permease protein ScaB from Streptococcus gordonii.